The primary structure comprises 1176 residues: Pesticidal crystal protein Cry1Ag (1176 aa).

It belongs to the delta endotoxin family.

In terms of biological role, promotes colloidosmotic lysis by binding to the midgut epithelial cells of many lepidopteran larvae. The protein is Pesticidal crystal protein Cry1Ag (cry1Ag) of Bacillus thuringiensis.